We begin with the raw amino-acid sequence, 235 residues long: Glucosamine-6-phosphate deaminase (235 aa).

The active-site Proton acceptor; for enolization step is Asp62. Catalysis depends on Asn128, which acts as the For ring-opening step. Catalysis depends on His130, which acts as the Proton acceptor; for ring-opening step. Catalysis depends on Glu135, which acts as the For ring-opening step.

Belongs to the glucosamine/galactosamine-6-phosphate isomerase family. NagB subfamily.

It carries out the reaction alpha-D-glucosamine 6-phosphate + H2O = beta-D-fructose 6-phosphate + NH4(+). The protein operates within amino-sugar metabolism; N-acetylneuraminate degradation; D-fructose 6-phosphate from N-acetylneuraminate: step 5/5. Catalyzes the reversible isomerization-deamination of glucosamine 6-phosphate (GlcN6P) to form fructose 6-phosphate (Fru6P) and ammonium ion. The sequence is that of Glucosamine-6-phosphate deaminase from Lactococcus lactis subsp. cremoris (strain SK11).